Reading from the N-terminus, the 211-residue chain is uncharacterized protein (211 aa).

Low complexity-rich tracts occupy residues 1–19 (MQDP…SSSD) and 61–74 (SPSV…SSNA). Disordered stretches follow at residues 1–27 (MQDP…STGS) and 54–94 (ASSR…EPHR).

In terms of assembly, interacts with RLK902. Expressed in inflorescences, stems, rosette leaves and weakly in roots.

This is an uncharacterized protein from Arabidopsis thaliana (Mouse-ear cress).